The sequence spans 30 residues: U-actitoxin-Bcg2a (30 aa).

An intrachain disulfide couples Cys-7 to Cys-27.

The protein localises to the secreted. It localises to the nematocyst. In terms of biological role, possible voltage-gated potassium channel (Kv) blocker. In Bunodosoma cangicum (Sea anemone), this protein is U-actitoxin-Bcg2a.